The sequence spans 516 residues: Maturase K (516 aa).

It belongs to the intron maturase 2 family. MatK subfamily.

It is found in the plastid. It localises to the chloroplast. Functionally, usually encoded in the trnK tRNA gene intron. Probably assists in splicing its own and other chloroplast group II introns. In Chara connivens (Convergent stonewort), this protein is Maturase K.